The chain runs to 539 residues: CTP synthase (539 aa).

The tract at residues 1 to 268 is amidoligase domain; sequence MADTKYIFVT…DETVLRKVGL (268 aa). CTP is bound at residue S15. Residue S15 coordinates UTP. 16 to 21 is a binding site for ATP; the sequence is SLGKGI. Y56 is a binding site for L-glutamine. ATP is bound at residue D73. 2 residues coordinate Mg(2+): D73 and E143. CTP-binding positions include 150 to 152, 189 to 194, and K225; these read DIE and KTKPTQ. UTP contacts are provided by residues 189 to 194 and K225; that span reads KTKPTQ. One can recognise a Glutamine amidotransferase type-1 domain in the interval 294 to 536; the sequence is TIALVGKYVE…IREAIKTRKK (243 aa). An L-glutamine-binding site is contributed by G356. C383 serves as the catalytic Nucleophile; for glutamine hydrolysis. Residues 384–387, E407, and R464 contribute to the L-glutamine site; that span reads LGMQ. Active-site residues include H509 and E511.

The protein belongs to the CTP synthase family. Homotetramer.

The catalysed reaction is UTP + L-glutamine + ATP + H2O = CTP + L-glutamate + ADP + phosphate + 2 H(+). The enzyme catalyses L-glutamine + H2O = L-glutamate + NH4(+). It carries out the reaction UTP + NH4(+) + ATP = CTP + ADP + phosphate + 2 H(+). It participates in pyrimidine metabolism; CTP biosynthesis via de novo pathway; CTP from UDP: step 2/2. Its activity is regulated as follows. Allosterically activated by GTP, when glutamine is the substrate; GTP has no effect on the reaction when ammonia is the substrate. The allosteric effector GTP functions by stabilizing the protein conformation that binds the tetrahedral intermediate(s) formed during glutamine hydrolysis. Inhibited by the product CTP, via allosteric rather than competitive inhibition. Catalyzes the ATP-dependent amination of UTP to CTP with either L-glutamine or ammonia as the source of nitrogen. Regulates intracellular CTP levels through interactions with the four ribonucleotide triphosphates. This is CTP synthase from Porphyromonas gingivalis (strain ATCC 33277 / DSM 20709 / CIP 103683 / JCM 12257 / NCTC 11834 / 2561).